The chain runs to 424 residues: Zinc finger and BTB domain-containing protein 6 (424 aa).

Positions 33-97 constitute a BTB domain; the sequence is CDVSIYINDT…CYTGALEVKR (65 aa). Ser-202 carries the phosphoserine modification. 4 consecutive C2H2-type zinc fingers follow at residues 301 to 323, 326 to 348, 354 to 376, and 382 to 405; these read HQCP…LKMH, FLCL…IRGH, FQCT…LNIH, and YKCH…TSLH. The tract at residues 403 to 424 is disordered; it reads SLHGRSSGEKLPRHDLERQNLL. Residues 408 to 424 are compositionally biased toward basic and acidic residues; the sequence is SSGEKLPRHDLERQNLL.

Its subcellular location is the nucleus. Its function is as follows. May be involved in transcriptional regulation. In Bos taurus (Bovine), this protein is Zinc finger and BTB domain-containing protein 6 (ZBTB6).